The primary structure comprises 348 residues: Ninja-family protein AFP2 (348 aa).

Residues 186 to 272 (DSDGGGATGG…VDRKGKGMAT (87 aa)) form a disordered region. Residues 187–197 (SDGGGATGGGS) are compositionally biased toward gly residues. 2 stretches are compositionally biased toward polar residues: residues 207–216 (KNQQGSSNSC) and 228–244 (CSSNSGSQGTERPSVTR). Over residues 247–267 (KVNENENEKRVRSEDSVDRKG) the composition is skewed to basic and acidic residues.

This sequence belongs to the Ninja family. As to quaternary structure, forms a homodimer and heterodimer with AFP1 and AFP3. Interacts with ABI5/DPBF1, DPBF2, AREB3/DPBF3, EEL/DPBF4, ABF1, ABF3/DPBF5 and ABF4/AREB2.

It is found in the nucleus. Functionally, acts as a negative regulator of abscisic acid (ABA) response during germination through the ubiquitin-mediated proteolysis of ABI5/DPBF1. The protein is Ninja-family protein AFP2 (AFP2) of Arabidopsis thaliana (Mouse-ear cress).